Reading from the N-terminus, the 179-residue chain is MASSATMLSSVATAACAAPAQASMVAPFVGLKSASAFPVTQKTATGLSTLPSNGGRVQCMKVWPIVGLKKFETLSYLPTLSVESLLKQIEYLIRNGWVPCLEFSLEGFVSRDNNKSPGYYDGRYWTMWKLPMFGCTGAAQVVKEAAECKKEYPAAFIRVIGFDNVRQVQCVSFIVEKPE.

A chloroplast-targeting transit peptide spans 1–58 (MASSATMLSSVATAACAAPAQASMVAPFVGLKSASAFPVTQKTATGLSTLPSNGGRVQ).

The protein belongs to the RuBisCO small chain family. In terms of assembly, heterohexadecamer of 8 large and 8 small subunits.

It is found in the plastid. The protein localises to the chloroplast. Functionally, ruBisCO catalyzes two reactions: the carboxylation of D-ribulose 1,5-bisphosphate, the primary event in carbon dioxide fixation, as well as the oxidative fragmentation of the pentose substrate. Both reactions occur simultaneously and in competition at the same active site. Although the small subunit is not catalytic it is essential for maximal activity. The chain is Ribulose bisphosphate carboxylase small subunit, chloroplastic 5 from Fritillaria agrestis (Stinkbells).